We begin with the raw amino-acid sequence, 349 residues long: N-formyl peptide receptor 3 (349 aa).

The Extracellular segment spans residues 1–27; sequence METNFSIPLNESEEVLPEPAGHTVLWI. Residues Asn-4 and Asn-10 are each glycosylated (N-linked (GlcNAc...) asparagine). The chain crosses the membrane as a helical span at residues 28 to 50; it reads FSLLVHGVTFIFGVLGNGLVIWV. The Cytoplasmic portion of the chain corresponds to 51–61; it reads AGFRMTRTVNT. A helical membrane pass occupies residues 62–83; the sequence is ICYLNLALADFSFSAILPFRMV. The Extracellular segment spans residues 84–100; sequence SVAMREKWPFGTFLCKL. Cys-98 and Cys-176 are oxidised to a cystine. A helical transmembrane segment spans residues 101–121; it reads VHVMIDINLFVSVYLITIIAL. Residues 122–140 lie on the Cytoplasmic side of the membrane; that stretch reads DRCICVLHPAWAQNHRTMS. Residues 141-162 form a helical membrane-spanning segment; that stretch reads LAKRVMMGLWILAIVLTLPNFI. Over 163–205 the chain is Extracellular; sequence FWTTISTKNGDTYCIFNFPFWGDTAVERLNAFITMGKVFLILH. Residues 206–226 form a helical membrane-spanning segment; it reads FIIGFSMPMSIITVCYGIIAA. The Cytoplasmic segment spans residues 227 to 242; the sequence is KIHRNHMIKSSSPLRV. Residues 243–266 traverse the membrane as a helical segment; that stretch reads FAAVVASFFICWFPYELIGILMAV. Residues 267-286 lie on the Extracellular side of the membrane; it reads WLKEMLLNGKYKIILVLLNP. Residues 287 to 306 traverse the membrane as a helical segment; the sequence is TSSLAFFNSCLNPILYVFLG. The Cytoplasmic portion of the chain corresponds to 307–349; it reads SNFQERLIRSLPTSLERALTEVPDSAQTSNTHTNSASPPEETE. Residues 328–349 are disordered; sequence VPDSAQTSNTHTNSASPPEETE. The span at 331 to 343 shows a compositional bias: polar residues; the sequence is SAQTSNTHTNSAS.

Belongs to the G-protein coupled receptor 1 family.

The protein resides in the cell membrane. Functionally, low affinity receptor for N-formyl-methionyl peptides, which are powerful neutrophils chemotactic factors. Binding of FMLP to the receptor causes activation of neutrophils. This response is mediated via a G-protein that activates a phosphatidylinositol-calcium second messenger system. The sequence is that of N-formyl peptide receptor 3 (FPR3) from Pongo pygmaeus (Bornean orangutan).